The following is a 477-amino-acid chain: Glycogen synthase (477 aa).

Residue lysine 15 coordinates ADP-alpha-D-glucose.

This sequence belongs to the glycosyltransferase 1 family. Bacterial/plant glycogen synthase subfamily.

It catalyses the reaction [(1-&gt;4)-alpha-D-glucosyl](n) + ADP-alpha-D-glucose = [(1-&gt;4)-alpha-D-glucosyl](n+1) + ADP + H(+). It functions in the pathway glycan biosynthesis; glycogen biosynthesis. In terms of biological role, synthesizes alpha-1,4-glucan chains using ADP-glucose. This chain is Glycogen synthase, found in Anaeromyxobacter dehalogenans (strain 2CP-1 / ATCC BAA-258).